The primary structure comprises 416 residues: Probable tRNA pseudouridine synthase D (416 aa).

Asp-83 functions as the Nucleophile in the catalytic mechanism. The region spanning 158 to 379 (GFPNYFGYQR…PGGRRELLIR (222 aa)) is the TRUD domain.

The protein belongs to the pseudouridine synthase TruD family.

The enzyme catalyses uridine(13) in tRNA = pseudouridine(13) in tRNA. Its function is as follows. Could be responsible for synthesis of pseudouridine from uracil-13 in transfer RNAs. This Thermococcus onnurineus (strain NA1) protein is Probable tRNA pseudouridine synthase D.